The primary structure comprises 389 residues: E3 ubiquitin-protein ligase E3D (389 aa).

Position 2 is an N-acetylalanine (A2). Positions 129-159 (PLPGDNWGALVDEWCCHPDPFANKPLHPREN) match the BRAT1-like motif motif. Residue C144 coordinates Zn(2+). Residues 235–257 (LPSERNFPIIPRSQFVQSVLAQC) form an interaction with UBE2C region. Residues 353–389 (LPSTTCLELLLILSKSNATLPPSLRCMNSFQVAFLKM) form an HECT-like region.

In terms of assembly, interacts with UBE2C/UbcH10 (E2 ubiquitin-conjugating enzyme). In vitro, interacts with cyclin-B. In terms of processing, ubiquitinated by UBCH10 (E2 ubiquitin-conjugating enzyme).

It localises to the cytoplasm. It carries out the reaction S-ubiquitinyl-[E2 ubiquitin-conjugating enzyme]-L-cysteine + [acceptor protein]-L-lysine = [E2 ubiquitin-conjugating enzyme]-L-cysteine + N(6)-ubiquitinyl-[acceptor protein]-L-lysine.. Its pathway is protein modification; protein ubiquitination. Functionally, E3 ubiquitin-protein ligase which accepts ubiquitin from specific E2 ubiquitin-conjugating enzymes, and transfers it to substrates, generally promoting their degradation by the proteasome. Independently of its E3 ubiquitin-protein ligase activity, acts as an inhibitor of CPSF3 endonuclease activity by blocking CPSF3 active site. This Bos taurus (Bovine) protein is E3 ubiquitin-protein ligase E3D (UBE3D).